Reading from the N-terminus, the 328-residue chain is Tetraacyldisaccharide 4'-kinase (328 aa).

55–62 contacts ATP; sequence TAGGNGKT.

This sequence belongs to the LpxK family.

The catalysed reaction is a lipid A disaccharide + ATP = a lipid IVA + ADP + H(+). The protein operates within glycolipid biosynthesis; lipid IV(A) biosynthesis; lipid IV(A) from (3R)-3-hydroxytetradecanoyl-[acyl-carrier-protein] and UDP-N-acetyl-alpha-D-glucosamine: step 6/6. Functionally, transfers the gamma-phosphate of ATP to the 4'-position of a tetraacyldisaccharide 1-phosphate intermediate (termed DS-1-P) to form tetraacyldisaccharide 1,4'-bis-phosphate (lipid IVA). The polypeptide is Tetraacyldisaccharide 4'-kinase (Escherichia coli O7:K1 (strain IAI39 / ExPEC)).